The following is a 433-amino-acid chain: Divalent metal cation transporter MntH (433 aa).

11 consecutive transmembrane segments (helical) span residues 32 to 52, 62 to 82, 101 to 121, 131 to 151, 168 to 188, 209 to 229, 256 to 276, 296 to 316, 345 to 365, 366 to 386, and 401 to 421; these read LIFAGPAVVASIAYMDPGNFA, GYDLLWVVLLASLIAMLFQGL, TLPPALTIPMWIISEIAAMAT, IGIALLAHLPLMAGMAITGIV, LVIGALVGVIALCYLAELLIV, ALTIAVGIVGATVMPHALFLH, VLAALGVAGMVNMAMVAMAAG, SPLLGAGAAVIFLISLLASGV, ALTMIPGFVVIGLGVNPTRAL, VLSQVVLSLALPVPMLALLWF, and ITAIAAIGGAIVILGLNVILL.

The protein belongs to the NRAMP family.

Its subcellular location is the cell inner membrane. In terms of biological role, h(+)-stimulated, divalent metal cation uptake system. The protein is Divalent metal cation transporter MntH of Acidiphilium cryptum (strain JF-5).